The primary structure comprises 550 residues: Epidermal growth factor-like protein 6 (550 aa).

The signal sequence occupies residues 1-18 (MQPPWGLALPLLLPWVTG). An EGF-like 1 domain is found at 55–90 (NKGVCEAMCEPRCKFGECVGPNKCRCFPGYTGKTCT). 6 disulfides stabilise this stretch: C59/C72, C63/C78, C80/C89, C96/C107, C103/C116, and C118/C130. The region spanning 92-131 (DVNECGVKPRPCQHRCVNTHGSYKCFCLSGHMLLPDATCS) is the EGF-like 2; calcium-binding domain. One can recognise an EGF-like 3 domain in the interval 135–171 (TCARLNCQYGCEDTEEGPRCVCPSSGLRLGPNGRVCL). In terms of domain architecture, EGF-like 4; calcium-binding spans 172–210 (DIDECASSKAVCPSNRRCVNTFGSYYCKCHIGFELKYIG). Disulfide bonds link C176-C189, C183-C198, C221-C234, C228-C243, and C245-C256. The region spanning 217–257 (DINECALNTHPCSPHANCLNTRGSFKCKCKQGYRGNGLQCS) is the EGF-like 5; calcium-binding domain. Positions 295 to 354 (KMVTPRPASTRVPKVNLPYSSEEGVSRGRNYDGEQKKKEEGKRERLEEEKGEKTLRNEVE) are disordered. Over residues 318-354 (GVSRGRNYDGEQKKKEEGKRERLEEEKGEKTLRNEVE) the composition is skewed to basic and acidic residues. Positions 327–357 (GEQKKKEEGKRERLEEEKGEKTLRNEVEQER) form a coiled coil. N394 is a glycosylation site (N-linked (GlcNAc...) asparagine). The MAM domain occupies 397–543 (VDCSFDLGVC…VLLVSGLCPD (147 aa)).

The protein belongs to the nephronectin family. In terms of tissue distribution, expressed at basement membrane of pelage follicles (at protein level).

The protein resides in the secreted. The protein localises to the extracellular space. It localises to the extracellular matrix. Its subcellular location is the basement membrane. May bind integrin alpha-8/beta-1 and play a role in hair follicle morphogenesis. Promotes matrix assembly. The sequence is that of Epidermal growth factor-like protein 6 (Egfl6) from Mus musculus (Mouse).